The chain runs to 220 residues: Adenylate kinase (220 aa).

G10–T15 contributes to the ATP binding site. The interval S30 to V59 is NMP. AMP contacts are provided by residues T31, R36, K57–V59, G85–R88, and Q92. The LID stretch occupies residues G122–D159. ATP is bound by residues R123 and T132–Y133. Residues R156 and R167 each coordinate AMP. G206 contributes to the ATP binding site.

It belongs to the adenylate kinase family. In terms of assembly, monomer.

It localises to the cytoplasm. The catalysed reaction is AMP + ATP = 2 ADP. It participates in purine metabolism; AMP biosynthesis via salvage pathway; AMP from ADP: step 1/1. Catalyzes the reversible transfer of the terminal phosphate group between ATP and AMP. Plays an important role in cellular energy homeostasis and in adenine nucleotide metabolism. The sequence is that of Adenylate kinase from Burkholderia multivorans (strain ATCC 17616 / 249).